The following is a 213-amino-acid chain: Iron sulfur cluster assembly protein 1, mitochondrial (213 aa).

This sequence belongs to the NifU family. Component of the core Fe-S cluster (ISC) assembly machinery. [2Fe-2S] cluster serves as cofactor.

It localises to the mitochondrion matrix. It participates in cofactor biosynthesis; iron-sulfur cluster biosynthesis. Scaffold protein for the de novo synthesis of iron-sulfur (Fe-S) clusters within mitochondria, which is required for maturation of both mitochondrial and cytoplasmic [2Fe-2S] and [4Fe-4S] proteins. First, a [2Fe-2S] cluster is transiently assembled on the scaffold protein ISU1. In a second step, the cluster is released from ISU1, transferred to a glutaredoxin, followed by the formation of mitochondrial [2Fe-2S] proteins, the synthesis of [4Fe-4S] clusters and their target-specific insertion into the recipient apoproteins. Cluster assembly on ISU1 depends on the function of the cysteine desulfurase complex NFS1-ISD11, which serves as the sulfur donor for cluster synthesis, the iron-binding protein frataxin as the putative iron donor, and the electron transfer chain comprised of ferredoxin reductase and ferredoxin, which receive their electrons from NADH. The chain is Iron sulfur cluster assembly protein 1, mitochondrial (ISU1) from Candida glabrata (strain ATCC 2001 / BCRC 20586 / JCM 3761 / NBRC 0622 / NRRL Y-65 / CBS 138) (Yeast).